A 138-amino-acid chain; its full sequence is Nucleoside diphosphate kinase (138 aa).

ATP is bound by residues Lys-11, Phe-59, Arg-87, Thr-93, Arg-104, and Asn-114. The Pros-phosphohistidine intermediate role is filled by His-117.

Belongs to the NDK family. It depends on Mg(2+) as a cofactor.

The protein resides in the cytoplasm. It catalyses the reaction a 2'-deoxyribonucleoside 5'-diphosphate + ATP = a 2'-deoxyribonucleoside 5'-triphosphate + ADP. It carries out the reaction a ribonucleoside 5'-diphosphate + ATP = a ribonucleoside 5'-triphosphate + ADP. Its function is as follows. Major role in the synthesis of nucleoside triphosphates other than ATP. The ATP gamma phosphate is transferred to the NDP beta phosphate via a ping-pong mechanism, using a phosphorylated active-site intermediate. The chain is Nucleoside diphosphate kinase from Saccharolobus solfataricus (strain ATCC 35092 / DSM 1617 / JCM 11322 / P2) (Sulfolobus solfataricus).